The sequence spans 505 residues: MSQQDKKLTGVFGHPVSDRENSMTAGPRGPLLMQDIYFLEQMSQFDREVIPERRMHAKGSGAFGTFTVTKDITKYTNAKIFSEIGKQTEMFARFSTVAGERGAADAERDIRGFALKFYTEEGNWDLVGNNTPVFFFRDPKLFVSLNRAVKRDPRTNMRDAQNNWDFWTGLPEALHQVTILMSDRGIPKDLRHMHGFGSHTYSMYNDSGERVWVKFHFRTQQGIENLTDEEAAEIIATDRDSSQRDLFEAIEKGDYPKWTMYIQVMTEEQAKNHKDNPFDLTKVWYHDEYPLIEVGEFELNRNPDNYFMDVEQAAFAPTNIIPGLDFSPDKMLQGRLFSYGDAQRYRLGVNHWQIPVNQPKGVGIENICPFSRDGQMRVVDNNQGGGTHYYPNNHGKFDSQPEYKKPPFPTDGYGYEYNQRQDDDNYFEQPGKLFRLQSEDAKERIFTNTANAMEGVTDDVKRRHIRHCYKADPEYGKGVAKALGIDINSIDLETENDETYENFEK.

The segment at 1–25 (MSQQDKKLTGVFGHPVSDRENSMTA) is disordered. Catalysis depends on residues His56 and Asn129. Residue Tyr339 coordinates heme.

It belongs to the catalase family. As to quaternary structure, homodimer. Heme is required as a cofactor.

The enzyme catalyses 2 H2O2 = O2 + 2 H2O. Functionally, decomposes hydrogen peroxide into water and oxygen; serves to protect cells from the toxic effects of hydrogen peroxide. The chain is Catalase (katA) from Staphylococcus aureus (strain MSSA476).